The sequence spans 152 residues: Transcriptional regulator MraZ (152 aa).

SpoVT-AbrB domains are found at residues 5-52 (ATQI…TLSE) and 81-124 (ASEC…DEQA).

Belongs to the MraZ family. In terms of assembly, forms oligomers.

The protein resides in the cytoplasm. Its subcellular location is the nucleoid. Functionally, negatively regulates its own expression and that of the subsequent genes in the proximal part of the division and cell wall (dcw) gene cluster. Acts by binding directly to DNA. May also regulate the expression of genes outside the dcw cluster. The chain is Transcriptional regulator MraZ from Photorhabdus laumondii subsp. laumondii (strain DSM 15139 / CIP 105565 / TT01) (Photorhabdus luminescens subsp. laumondii).